The following is an 868-amino-acid chain: MAMPLCSLTSYNPITTTLRGHHFLTINAYVKTQCIPCFFIKLHTRSSASKQRIIDLRSGSSNIVACVGEGATSLSSHSDIMKTGKREEIPPGVWKDDISDSIMSSHKPEADEKRVEILIAEIKSMFRGMGDGETTPSAYDTAWVAKIPALDGSDHPHFPQTLQWILQNQLQDGSWGEGTYFSAYDRLLATLACIITLTVWRTGQTQVRQGIEFFRKHAGTMEDEADNHQPIGFEFVFPAMINEAKSLCLDLPYDTPFIKQIIEKREAKLKMIPTDTLYTVPTTFLHYLEGLQEIIDCQKIIKLQSKDGSFLSSPASTAAVFMCTGNTKCLEFLNFVLIKFGNHVPCQYPLDLFERLWAVDIVERLGIDRHFKKEIKDALDYVYSHWDERGIGWARENPVAYIDVMATGIRILRLHRYNVSSDILKTFRDENGEFYRFPGQSERGVTDMLNLNRCSHVAFPGETVMEEAKLCTERYLWNALENVNPLDKWDLKENIRGEVEYALKYPWLRRLPRLETRNYIEHYGANDVWLGKMMHMMPYINDRKYLELAKLDFNNVQSIHQKELRELRRWWKSSGFAELNFLPDRVAEIFFSIASSMFEPELATCRAVYTKSTLCTVILDGFYDVHGSAEDIMLFNEAVKRWDHSLLDRMPEHIKTCFLALYNVVNEIAEEGRKRQGHDVLPYIRNLWEIQLESFTKEAEWSRAEHVPSFHEYIEAAAISSALPTLVLIGVIFTGEVLTDHILSQIDYRSKFAYLMSLTGRLANDTKTYQVERSRGEVASAIQCYMKENPELSEEEALEYIYRLMENALADFKREFLKTKDVPEYCRRLVFDNARSMQLIYMEGDGFKLSHETEIKEHVKKILFEPVA.

Residues D620, D624, N764, T768, and E772 each contribute to the Mg(2+) site.

This sequence belongs to the terpene synthase family. Tpsd subfamily. Requires Mg(2+) as cofactor.

The enzyme catalyses (+)-copalyl diphosphate = (-)-pimara-8(14),15-diene + diphosphate. Its pathway is terpene metabolism; oleoresin biosynthesis. In terms of biological role, involved in defensive oleoresin formation in conifers in response to insect attack or other injury. Involved in diterpene (C20) olefins biosynthesis. Monofunctional enzyme lacking the DXDD motif in the class II active site relevant for the cyclization of geranylgeranyl diphosphate (GGPP). Requires (+)-copalyl diphosphate ((+)-CPP) as substrate, but no activity with GGPP or ent-CPP. Pimaradiene is the major products of the enzyme. The chain is Monofunctional pimaradiene synthase from Pinus banksiana (Jack pine).